Here is a 3317-residue protein sequence, read N- to C-terminus: Cadherin-23 (3317 aa).

A signal peptide spans 1–23 (MRHPPVTWCAMLWLLMLVSGSWG). The Extracellular portion of the chain corresponds to 24 to 3062 (QVNRLPFFTN…SVQLPDDMSA (3039 aa)). 27 Cadherin domains span residues 34–132 (HFFD…APTF), 133–236 (HNQP…DPIF), 237–348 (INLP…APEF), 349–458 (NSSE…RPIF), 459–559 (SQPL…VPTF), 560–669 (QKDA…PPTF), 670–782 (SKPA…APYY), 777–888 (KDAP…DPTF), 889–993 (QNLP…TPTF), 994–1100 (FPAV…RPIF), 1101–1206 (LQSS…APVF), 1208–1311 (QQQY…AVQF), 1312–1416 (SNAS…SPRF), 1418–1525 (FTSD…PPVI), 1527–1632 (SPFG…APVF), 1633–1742 (QQPH…VPTF), 1743–1849 (PRDY…DPVL), 1850–1957 (LNLP…HPLF), 1958–2067 (TEGT…WPTF), 2068–2172 (SPPA…RPEF), 2173–2291 (LNPI…TPQF), 2295–2400 (GITY…NPIF), 2401–2507 (DQLS…RPQF), 2508–2609 (SKPQ…RPVF), 2612–2720 (PPNG…EPLF), 2727–2844 (SPQY…PPRF), and 2845–2973 (TKAE…EEEF). N-linked (GlcNAc...) asparagine glycans are attached at residues Asn155 and Asn206. Asn349, Asn391, Asn432, Asn464, Asn470, Asn600, Asn692, Asn763, Asn808, Asn825, Asn939, Asn999, Asn1016, Asn1169, Asn1280, Asn1313, Asn1471, Asn1532, Asn1649, Asn1665, Asn1816, Asn1855, Asn1887, Asn1900, Asn2012, Asn2048, Asn2127, Asn2166, Asn2193, Asn2261, Asn2355, and Asn2367 each carry an N-linked (GlcNAc...) asparagine glycan. N-linked (GlcNAc...) asparagine glycosylation is found at Asn2576, Asn2614, Asn2747, Asn2806, Asn2875, Asn2894, Asn2939, and Asn2979. Residues 3063-3083 (LQMAIIVLAILLFLAAMLFVL) traverse the membrane as a helical segment. Residues 3084–3317 (MNWYYRTIHK…MESPLEITEL (234 aa)) are Cytoplasmic-facing.

Antiparallel heterodimer with PCDH15. Interacts with USH1C and USH1G.

The protein localises to the cell membrane. Its function is as follows. Cadherins are calcium-dependent cell adhesion proteins. They preferentially interact with themselves in a homophilic manner in connecting cells. CDH23 is required for establishing and/or maintaining the proper organization of the stereocilia bundle of hair cells in the cochlea and the vestibule during late embryonic/early postnatal development. It is part of the functional network formed by USH1C, USH1G, CDH23 and MYO7A that mediates mechanotransduction in cochlear hair cells. Required for normal hearing. This Rattus norvegicus (Rat) protein is Cadherin-23 (Cdh23).